Consider the following 297-residue polypeptide: tRNA pseudouridine synthase B (297 aa).

Asp-44 acts as the Nucleophile in catalysis.

The protein belongs to the pseudouridine synthase TruB family. Type 1 subfamily.

The enzyme catalyses uridine(55) in tRNA = pseudouridine(55) in tRNA. Its function is as follows. Responsible for synthesis of pseudouridine from uracil-55 in the psi GC loop of transfer RNAs. This Corynebacterium glutamicum (strain R) protein is tRNA pseudouridine synthase B.